Here is an 890-residue protein sequence, read N- to C-terminus: MPSLNDIRSTFLNYFAKQGHTIVPSSPLVPRNDPTLMFTNSGMVQFKNCFTGVDKRDYVRATTAQKCVRAGGKHNDLDNVGYTARHHTFFEMLGNFSFGDYFKSEAIPFAWELITRDFDIPKDRLYTTVYHTDDEAFEIWKKVGVPESRIIRIATSDNFWQMGPTGPCGPCTEIFYDHGDHIWGGPPGSPEEDGDRFIEIWNIVFMQNEKFEDGSMVDLDMQSIDTGMGLERIGALLQGSHDNYDTDLFKALIEASADATSVDPYGDQNVHHRVIADHLRSTSFLIADGVMPSNDGRGYVLRRIMRRAMRHAHLLGAKDPVMHRLVRTLVGQMGAAYPELGRAQALIEETLLLEETRFKQTLDRGLKLLDDELTALPEEAPLPGEAAFKLYDTYGFPLDLTQDALREKGRKVDTDGFDAAMAEQKAKARAAWAGSGESTDNAIWFDVLDVAGATDFLGYDTEKAEGQALALVVDGALSDRIAEGGSGWVVTNQTPFYGESGGQVGDTGVIRRLENRDHVALVEDSRKFADGKVYAHKVTMERGALAKGDAVELEVDHARRSAIRANHSATHLLHEALREALGDHVAQRGSLNAADRLRFDFSHAKALTEAELAQVGAEVNRFIRQNSRVETRIMTPDDARAIGAQALFGEKYGDEVRVVSMGRAETGKGADGKTWSIELCGGTHVAQTGDIGMFVLLGDSASSAGVRRIEALTGQAAFDHLSQEGARLSQVTAMLKAQPAEVAERVRALMDERKALQNEVAQLRRDLAMAGGAGQGGGAETHEVGGVPFLAQVLSGVSGKDLPALIDEHKSRMGSGAVLLIADAGGKAAVAAGVTEDLTARVSAVDLVKAAVAALGGKGGGGRPDMAQGGGQDAGKADAAIKAAEQVLGG.

Positions 567, 571, 680, and 684 each coordinate Zn(2+).

Belongs to the class-II aminoacyl-tRNA synthetase family. The cofactor is Zn(2+).

The protein resides in the cytoplasm. The enzyme catalyses tRNA(Ala) + L-alanine + ATP = L-alanyl-tRNA(Ala) + AMP + diphosphate. Catalyzes the attachment of alanine to tRNA(Ala) in a two-step reaction: alanine is first activated by ATP to form Ala-AMP and then transferred to the acceptor end of tRNA(Ala). Also edits incorrectly charged Ser-tRNA(Ala) and Gly-tRNA(Ala) via its editing domain. The protein is Alanine--tRNA ligase of Ruegeria pomeroyi (strain ATCC 700808 / DSM 15171 / DSS-3) (Silicibacter pomeroyi).